Here is a 61-residue protein sequence, read N- to C-terminus: Potassium channel toxin alpha-KTx 15.6 (61 aa).

The signal sequence occupies residues 1 to 23; it reads MKAFYGMLVIFILCSTCYISVDS. Q24 carries the post-translational modification Pyrrolidone carboxylic acid. 3 disulfides stabilise this stretch: C31/C52, C37/C57, and C41/C59.

This sequence belongs to the short scorpion toxin superfamily. Potassium channel inhibitor family. Alpha-KTx 15 subfamily. As to expression, expressed by the venom gland.

The protein resides in the secreted. Irreversibly blocks the A-type voltage-gated potassium channels in rat cerebellum granular cells (190 nM induce 50% inhibitory effect) (IC(50)=190 nM). Also weakly inhibits Kv1.2/KCNA2 and Kv1.3/KCNA3. This Tityus discrepans (Venezuelan scorpion) protein is Potassium channel toxin alpha-KTx 15.6.